We begin with the raw amino-acid sequence, 37 residues long: Somatostatin-37 (37 aa).

The propeptide occupies 1–2 (AL). A disulfide bond links Cys26 and Cys37.

It belongs to the somatostatin family.

The protein localises to the secreted. Functionally, somatostatin inhibits the release of somatotropin. The chain is Somatostatin-37 (sst) from Petromyzon marinus (Sea lamprey).